Consider the following 399-residue polypeptide: Phosphoglycerate kinase (399 aa).

Substrate contacts are provided by residues 21-23 (DFN), R36, 59-62 (HLGR), R120, and R158. ATP is bound by residues K209, G297, E328, and 355-358 (GGDS).

The protein belongs to the phosphoglycerate kinase family. Monomer.

Its subcellular location is the cytoplasm. It carries out the reaction (2R)-3-phosphoglycerate + ATP = (2R)-3-phospho-glyceroyl phosphate + ADP. It functions in the pathway carbohydrate degradation; glycolysis; pyruvate from D-glyceraldehyde 3-phosphate: step 2/5. The polypeptide is Phosphoglycerate kinase (Streptococcus thermophilus (strain CNRZ 1066)).